The sequence spans 385 residues: Odorant receptor 47a (385 aa).

Residues 1–33 are Cytoplasmic-facing; sequence MDSFLQVQKSTIALLGFDLFSENREMWKRPYRA. Residues 34–54 traverse the membrane as a helical segment; it reads MNVFSIAAIFPFILAAVLHNW. Topologically, residues 55-62 are extracellular; the sequence is KNVLLLAD. Residues 63–83 traverse the membrane as a helical segment; sequence AMVALLITILGLFKFSMILYL. The Cytoplasmic segment spans residues 84 to 129; the sequence is RRDFKRLIDKFRLLMSNEAEQGEEYAEILNAANKQDQRMCTLFRTC. A helical membrane pass occupies residues 130 to 150; the sequence is FLLAWALNSVLPLVRMGLSYW. The Extracellular portion of the chain corresponds to 151–175; the sequence is LAGHAEPELPFPCLFPWNIHIIRNY. A helical membrane pass occupies residues 176 to 196; it reads VLSFIWSAFASTGVVLPAVSL. Topologically, residues 197-255 are cytoplasmic; the sequence is DTIFCSFTSNLCAFFKIAQYKVVRFKGGSLKESQATLNKVFALYQTSLDMCNDLNQCYQ. A helical transmembrane segment spans residues 256–276; sequence PIICAQFFISSLQLCMLGYLF. Over 277-284 the chain is Extracellular; that stretch reads SITFAQTE. A helical membrane pass occupies residues 285 to 305; the sequence is GVYYASFIATIIIQAYIYCYC. Over 306-357 the chain is Cytoplasmic; the sequence is GENLKTESASFEWAIYDSPWHESLGAGGASTSICRSLLISMMRAHRGFRITG. A helical membrane pass occupies residues 358-378; the sequence is YFFEANMEAFSSIVRTAMSYI. Topologically, residues 379–385 are extracellular; the sequence is TMLRSFS.

It belongs to the insect chemoreceptor superfamily. Heteromeric odorant receptor channel (TC 1.A.69) family. Or1a subfamily. In terms of assembly, interacts with Orco. Complexes exist early in the endomembrane system in olfactory sensory neurons (OSNs), coupling these complexes to the conserved ciliary trafficking pathway. Expressed with Orco in 40 olfactory receptor neurons in a broad area across the antenna, including both anterior and posterior faces. This expression pattern matches the distribution of the small sensilla basiconica. Expression in the antenna is observed late in antennal development at 93 hours APF.

Its subcellular location is the cell membrane. Functionally, odorant receptor which mediates acceptance or avoidance behavior, depending on its substrates. The odorant receptor repertoire encodes a large collection of odor stimuli that vary widely in identity, intensity, and duration. Complexes with Orco to form odorant-sensing units, providing sensitive and prolonged odorant signaling and calcium permeability. They are necessary and sufficient to promote functional reconstitution of odor-evoked signaling in sensory neurons that normally respond only to carbon dioxide. Involved in the behavioral responses to esters. Involved in the behavioral responses to pentyl acetate. In Drosophila melanogaster (Fruit fly), this protein is Odorant receptor 47a (Or47a).